The primary structure comprises 206 residues: Large ribosomal subunit protein uL4 (206 aa).

Positions 44 to 80 are disordered; the sequence is KRAGTHSVKTRSTISGGGAKPWRQKGTGRARSGSNRS.

Belongs to the universal ribosomal protein uL4 family. In terms of assembly, part of the 50S ribosomal subunit.

Functionally, one of the primary rRNA binding proteins, this protein initially binds near the 5'-end of the 23S rRNA. It is important during the early stages of 50S assembly. It makes multiple contacts with different domains of the 23S rRNA in the assembled 50S subunit and ribosome. Its function is as follows. Forms part of the polypeptide exit tunnel. The chain is Large ribosomal subunit protein uL4 from Oleidesulfovibrio alaskensis (strain ATCC BAA-1058 / DSM 17464 / G20) (Desulfovibrio alaskensis).